We begin with the raw amino-acid sequence, 264 residues long: 1H-3-hydroxy-4-oxoquinoline 2,4-dioxygenase (264 aa).

Residues 30-32 (WCQ), 94-95 (TS), and tryptophan 153 contribute to the substrate site. Histidine 244 serves as the catalytic Proton donor/acceptor.

Belongs to the AB hydrolase superfamily. It depends on None. Contrary to most other dioxygenases, this enzyme does not require a cofactor for catalysis. as a cofactor.

It carries out the reaction 3-hydroxy-1H-quinolin-4-one + O2 = N-formylanthranilate + CO + H(+). Ring-cleaving dioxygenase involved in oxoquinoline degradation and utilization. This Pseudomonas putida (Arthrobacter siderocapsulatus) protein is 1H-3-hydroxy-4-oxoquinoline 2,4-dioxygenase (qdo).